The primary structure comprises 355 residues: Protein pelota homolog (355 aa).

Belongs to the eukaryotic release factor 1 family. Pelota subfamily. Monomer. The cofactor is a divalent metal cation.

The protein resides in the cytoplasm. May function in recognizing stalled ribosomes, interact with stem-loop structures in stalled mRNA molecules, and effect endonucleolytic cleavage of the mRNA. May play a role in the release non-functional ribosomes and degradation of damaged mRNAs. Has endoribonuclease activity. The sequence is that of Protein pelota homolog from Natronomonas pharaonis (strain ATCC 35678 / DSM 2160 / CIP 103997 / JCM 8858 / NBRC 14720 / NCIMB 2260 / Gabara) (Halobacterium pharaonis).